The chain runs to 328 residues: Methionyl-tRNA formyltransferase (328 aa).

110–113 serves as a coordination point for (6S)-5,6,7,8-tetrahydrofolate; it reads SLLP.

The protein belongs to the Fmt family.

It catalyses the reaction L-methionyl-tRNA(fMet) + (6R)-10-formyltetrahydrofolate = N-formyl-L-methionyl-tRNA(fMet) + (6S)-5,6,7,8-tetrahydrofolate + H(+). Functionally, attaches a formyl group to the free amino group of methionyl-tRNA(fMet). The formyl group appears to play a dual role in the initiator identity of N-formylmethionyl-tRNA by promoting its recognition by IF2 and preventing the misappropriation of this tRNA by the elongation apparatus. This Prochlorococcus marinus subsp. pastoris (strain CCMP1986 / NIES-2087 / MED4) protein is Methionyl-tRNA formyltransferase.